A 264-amino-acid chain; its full sequence is MKILVAVKQTAALEEDFEIREDGMDVDEDFMMYDLNEWDDFSLEEAMKIKESSDTDVEVVVVSVGPDRVDESLRKCLAKGADRAVRVWDDAAEGSDAIVVGRILTEVIKKEAPDMVFAGVQSSDQAYASTGISVASYLNWPHAAVVADLQYKPGDNKAVIRRELEGGMLQEVEINCPAVLTIQLGINKPRYASLRGIKQAATKPIEEVSLADIGLSANDVGAAQSMSRVRRMYIPEKGRATMIEGTISEQAAKIIQIINEFKGA.

AMP is bound by residues alanine 6, 36-39 (NEWD), valine 64, 119-122 (GVQS), and 127-130 (YAST).

In terms of assembly, heterodimer of an alpha and a beta subunit. Forms a ternary complex with trimethylamine dehydrogenase.

Functionally, heterodimeric electron transfer flavoprotein that accepts electrons from trimethylamine dehydrogenase. It transfers the electrons to the main respiratory chain via ETF-ubiquinone oxidoreductase (ETF dehydrogenase). EtfB binds an AMP molecule that probably has a purely structural role. The protein is Electron transfer flavoprotein subunit beta (etfB) of Methylophilus methylotrophus (Bacterium W3A1).